The chain runs to 284 residues: Large ribosomal subunit protein uL2 (284 aa).

Disordered regions lie at residues 28 to 50 (ELKG…FKKS) and 232 to 284 (RGTA…DRRK). A compositionally biased stretch (basic residues) spans 36 to 46 (RSVRPNKKLSF). Residues 240–250 (DHPHGGGEGRH) are compositionally biased toward basic and acidic residues. The span at 264-284 (KGLKTRDKRKSNKWIVKDRRK) shows a compositional bias: basic residues.

Belongs to the universal ribosomal protein uL2 family. As to quaternary structure, part of the 50S ribosomal subunit. Forms a bridge to the 30S subunit in the 70S ribosome.

Functionally, one of the primary rRNA binding proteins. Required for association of the 30S and 50S subunits to form the 70S ribosome, for tRNA binding and peptide bond formation. It has been suggested to have peptidyltransferase activity; this is somewhat controversial. Makes several contacts with the 16S rRNA in the 70S ribosome. The polypeptide is Large ribosomal subunit protein uL2 (Chlamydia trachomatis serovar L2 (strain ATCC VR-902B / DSM 19102 / 434/Bu)).